The following is a 22-amino-acid chain: Heat shock 70-related protein 1, mitochondrial (22 aa).

Belongs to the heat shock protein 70 family.

It is found in the mitochondrion. The chain is Heat shock 70-related protein 1, mitochondrial from Leishmania tarentolae (Sauroleishmania tarentolae).